The following is a 356-amino-acid chain: MGLFGGRKHGGLFTFNKDDGYLEAILRGFKKGILSRADYNNLCQCDNLEDMKMHFISTDYGDFLAGEPSPIHTTTIAEKATGKLVSEFNHIRNQAVEPLSTFMDFISYGYMIDNVVLLITGTLHERDISELVDKCHPLGLFKSMATLSVVHNVADLYNNVLIDTPLAPYIQGCLSEEDLDEMNIEIIRNTLYKAYLEDFYNYCKYLGGQTELIMSDILKFEADRRSINITINSFGATELSKDDREKLYPSLGLLYPEGTSKLGKAEDVDQVRGILEVYSTYRNFFSDGVNNEKSLEDSFFEHEVHLNRMAFEDQYGYGVFYAYIKLREQEIRNIVWIAECISQNMKQKMNQYIPIF.

The protein belongs to the V-ATPase V0D/AC39 subunit family. V-ATPase is a heteromultimeric enzyme composed of a peripheral catalytic V1 complex (components A to H) attached to an integral membrane V0 proton pore complex (components: a, c, c', c'' and d).

Subunit of the integral membrane V0 complex of vacuolar ATPase. Vacuolar ATPase is responsible for acidifying a variety of intracellular compartments in eukaryotic cells, thus providing most of the energy required for transport processes in the vacuolar system. The protein is V-type proton ATPase subunit d (vatD-1) of Dictyostelium discoideum (Social amoeba).